A 300-amino-acid polypeptide reads, in one-letter code: uncharacterized protein (300 aa).

A compositionally biased stretch (polar residues) spans 1-11 (MYNEGVTSPSQ). Residues 1–20 (MYNEGVTSPSQLARKKNATD) are disordered. The segment at residues 1-92 (MYNEGVTSPS…QEILITRKRR (92 aa)) is a DNA-binding region (recombinase). Residues 162 to 249 (SKENYFKELS…DLEFQKIEKE (88 aa)) adopt a coiled-coil conformation.

This is an uncharacterized protein from Bacillus subtilis (strain 168).